Consider the following 190-residue polypeptide: Secretory phospholipase A2 (190 aa).

Residues 1–15 (MKLAYFSSLLPLALA) form the signal peptide. A disulfide bridge links cysteine 62 with cysteine 78. Alanine 65 is a Ca(2+) binding site. Histidine 81 is an active-site residue. Aspartate 82 serves as a coordination point for Ca(2+).

This sequence belongs to the phospholipase A2 family. It depends on Ca(2+) as a cofactor.

The protein resides in the lipid droplet. It localises to the secreted. It catalyses the reaction a 1,2-diacyl-sn-glycero-3-phosphocholine + H2O = a 1-acyl-sn-glycero-3-phosphocholine + a fatty acid + H(+). Secretory phospholipase that catalyzes the calcium-dependent hydrolysis of the 2-acyl groups in 3-sn-phosphoglycerides. Increases the ability to utilize insect-derived nutrients and lipids, and promotes lipid dropplets accumulation. Plays a role in virulence, including more efficient penetration of the insect cuticle and evasion of host immune response by repressing the expression of host immunity genes. The polypeptide is Secretory phospholipase A2 (Beauveria bassiana (strain ARSEF 2860) (White muscardine disease fungus)).